The primary structure comprises 327 residues: Delta(3,5)-Delta(2,4)-dienoyl-CoA isomerase, mitochondrial (327 aa).

The N-terminal 33 residues, 1–33, are a transit peptide targeting the mitochondrion; the sequence is MATAMTVSSKLLGLLMQQLRGTRQLYFNVSLRS. Residues 115 to 119 and Gly-173 contribute to the substrate site; that span reads SGIDL. The residue at position 230 (Lys-230) is an N6-succinyllysine. At Ser-267 the chain carries Phosphoserine. Lys-316 carries the post-translational modification N6-succinyllysine. A Microbody targeting signal motif is present at residues 325–327; sequence SKL. At Lys-326 the chain carries N6-acetyllysine.

This sequence belongs to the enoyl-CoA hydratase/isomerase family. In terms of assembly, homohexamer. Expressed in heart and liver (at protein level).

The protein resides in the mitochondrion. It is found in the peroxisome. It catalyses the reaction (3E,5Z)-octadienoyl-CoA = (2E,4E)-octadienoyl-CoA. The enzyme catalyses (3E,5Z,8Z,11Z,14Z)-eicosapentaenoyl-CoA = (2E,4E,8Z,11Z,14Z)-eicosapentaenoyl-CoA. It functions in the pathway lipid metabolism; fatty acid beta-oxidation. Isomerization of 3-trans,5-cis-dienoyl-CoA to 2-trans,4-trans-dienoyl-CoA. This is Delta(3,5)-Delta(2,4)-dienoyl-CoA isomerase, mitochondrial from Rattus norvegicus (Rat).